The primary structure comprises 86 residues: uncharacterized protein (86 aa).

An N-terminal signal peptide occupies residues M1 to A25.

This is an uncharacterized protein from Bacillus subtilis (strain 168).